A 1183-amino-acid polypeptide reads, in one-letter code: SR-related and CTD-associated factor 4 (1183 aa).

Residues 1–139 (MDAVNAFNQE…PLLDMAAGTS (139 aa)) form the CID domain. Lys49 carries the post-translational modification N6-acetyllysine. Ser154 carries the phosphoserine modification. Disordered regions lie at residues 299-324 (VPVP…VQQP) and 348-561 (HHQV…QIKS). Over residues 367–380 (APPPFPPMPQPGMP) the composition is skewed to pro residues. Low complexity predominate over residues 381-398 (QPGMAQPGLAQPGMAQPT). A compositionally biased stretch (pro residues) spans 399–410 (MPQPGMPQPGMP). The span at 411-428 (QPGMAQPGLAQPGMAQPG) shows a compositional bias: low complexity. A compositionally biased stretch (pro residues) spans 429–440 (MPQPAMPQPAMP). Polar residues predominate over residues 457–469 (PTFQSTFQPQNEP). Over residues 488-498 (EVKRHVPESRK) the composition is skewed to basic and acidic residues. Basic residues predominate over residues 499-536 (SRSRSPKRRRSRSGSRSRRSRHRRSRSRSRDRRRHSPR). Residues 538-553 (RSQERRDREKERERRQ) are compositionally biased toward basic and acidic residues. In terms of domain architecture, RRM spans 569 to 643 (TTLWVGQLDK…KSIKIAWALN (75 aa)). Disordered stretches follow at residues 691-722 (WKGI…IPKP), 800-858 (LPPG…SLPT), and 920-1183 (MPPH…EPPR). Phosphoserine is present on Ser717. Composition is skewed to pro residues over residues 800-823 (LPPG…PPIS) and 920-952 (MPPH…PPHG). The segment covering 1006–1020 (SPSQQPAPAQQQPPQ) has biased composition (low complexity). Residue Ser1042 is modified to Phosphoserine. Residues 1047–1122 (VENDRERYGS…NRKEKHEVAD (76 aa)) are compositionally biased toward basic and acidic residues. A compositionally biased stretch (polar residues) spans 1136–1145 (QVGTIDTVSE).

In terms of assembly, interacts with POLR2A; via C-terminal heptapeptide repeat domain (CTD) phosphorylated at 'Ser-2' and 'Ser-5'.

Its subcellular location is the nucleus. Anti-terminator protein required to prevent early mRNA termination during transcription. Together with SCAF8, acts by suppressing the use of early, alternative poly(A) sites, thereby preventing the accumulation of non-functional truncated proteins. Mechanistically, associates with the phosphorylated C-terminal heptapeptide repeat domain (CTD) of the largest RNA polymerase II subunit (POLR2A), and subsequently binds nascent RNA upstream of early polyadenylation sites to prevent premature mRNA transcript cleavage and polyadenylation. Independently of SCAF8, also acts as a suppressor of transcriptional readthrough. The protein is SR-related and CTD-associated factor 4 of Mus musculus (Mouse).